We begin with the raw amino-acid sequence, 454 residues long: Probable ECA polymerase (454 aa).

The next 11 membrane-spanning stretches (helical) occupy residues 6 to 26 (FSGL…LTWF), 37 to 57 (VFFS…TSIL), 63 to 83 (VAVV…CFYA), 122 to 142 (MMAV…FLLF), 157 to 177 (GVAL…VYFL), 183 to 203 (AWLF…MIVG), 209 to 229 (IIIA…ISPG), 230 to 250 (MLAA…LKRY), 343 to 363 (LVVM…GLII), 380 to 400 (YKAA…IVLA), and 411 to 431 (VIFF…IYWL).

The protein belongs to the WzyE family. In terms of assembly, probably part of a complex composed of WzxE, WzyE and WzzE.

The protein resides in the cell inner membrane. Its pathway is bacterial outer membrane biogenesis; enterobacterial common antigen biosynthesis. Its function is as follows. Probably involved in the polymerization of enterobacterial common antigen (ECA) trisaccharide repeat units. The polypeptide is Probable ECA polymerase (Cronobacter sakazakii (strain ATCC BAA-894) (Enterobacter sakazakii)).